Here is a 218-residue protein sequence, read N- to C-terminus: MASLQPIKLYAHKKGPNPWKVALILEELGLPYETTYLEFPDAKVEPYISLNPNGKLPAIQDPNHSIELFESGAIIEYLIEQYDKDGKLSHESLQDKSLARAWLHLQMSAQAPVIGYKVWMGRTYDASQIVSANEFLTLEIKRVLGVLDKHLAKMGGPYLLGSKVSYADLAFVPHYMMLPLFVPDYDPATEYPHFAAWLAALKERPAVKKIAATKAALA.

Residues Q5–G86 enclose the GST N-terminal domain. A GST C-terminal domain is found at S92–A218.

The protein belongs to the GST superfamily.

It functions in the pathway secondary metabolite biosynthesis. Glutathione S-transferase-like protein; part of the gene cluster that mediates the biosynthesis of the bibenzoquinone oosporein, a metabolite required for fungal virulence that acts by evading host immunity to facilitate fungal multiplication in insects. The non-reducing polyketide synthase OpS1 produces orsellinic acid by condensing acetyl-CoA with 3 malonyl-CoA units. Orsellinic acid is then hydroxylated to benzenetriol by the hydroxylase OpS4. The intermediate is oxidized either nonenzymatically to 5,5'-dideoxy-oosporein or enzymatically to benzenetetrol by the oxidoreductase OpS7. The latter is further dimerized to oosporein by the catalase OpS5. OpS6 probably functions en route for protecting cells against oxidative stress by scavenging any leaked free radical form of benzenetetrol by activating the thiol group of glutathione. This chain is Glutathione S-transferase-like protein OpS6, found in Beauveria bassiana (strain ARSEF 2860) (White muscardine disease fungus).